The sequence spans 436 residues: Probable D-serine dehydratase (436 aa).

K111 carries the N6-(pyridoxal phosphate)lysine modification.

Belongs to the serine/threonine dehydratase family. DsdA subfamily. Requires pyridoxal 5'-phosphate as cofactor.

It catalyses the reaction D-serine = pyruvate + NH4(+). This chain is Probable D-serine dehydratase, found in Lactiplantibacillus plantarum (strain ATCC BAA-793 / NCIMB 8826 / WCFS1) (Lactobacillus plantarum).